The primary structure comprises 953 residues: Translation initiation factor IF-2 (953 aa).

Residues 55 to 340 (GVTTEAPAAS…KSKRQKRNEY (286 aa)) form a disordered region. Residues 81–93 (KPAATPQQAAKPA) are compositionally biased toward low complexity. Residues 110 to 119 (PKPAAKPVPK) show a composition bias toward pro residues. Composition is skewed to low complexity over residues 123–133 (SAAKAESSAPK) and 143–160 (KPAAQSSTTATPGSMPRP). A compositionally biased stretch (gly residues) spans 202-219 (PGGGPRPGGNRPQGGQGG). A compositionally biased stretch (low complexity) spans 233-248 (QPRPQGGSRSQQSGGQ). Gly residues predominate over residues 280 to 323 (NGRGGAGGQGGRPGFGGGRPGGGGSAGGRGGRRGGTAGAFGRPG). A compositionally biased stretch (basic residues) spans 327–336 (RKGRKSKRQK). Residues 449 to 621 (KRPPVVTVMG…VLLTADASLD (173 aa)) enclose the tr-type G domain. The segment at 458–465 (GHVDHGKT) is G1. 458-465 (GHVDHGKT) is a GTP binding site. The tract at residues 483 to 487 (GITQG) is G2. Residues 508 to 511 (DTPG) form a G3 region. Residues 508–512 (DTPGH) and 562–565 (NKID) each bind GTP. The G4 stretch occupies residues 562 to 565 (NKID). Residues 598–600 (SAK) form a G5 region.

Belongs to the TRAFAC class translation factor GTPase superfamily. Classic translation factor GTPase family. IF-2 subfamily.

The protein localises to the cytoplasm. One of the essential components for the initiation of protein synthesis. Protects formylmethionyl-tRNA from spontaneous hydrolysis and promotes its binding to the 30S ribosomal subunits. Also involved in the hydrolysis of GTP during the formation of the 70S ribosomal complex. This is Translation initiation factor IF-2 from Corynebacterium diphtheriae (strain ATCC 700971 / NCTC 13129 / Biotype gravis).